The following is a 227-amino-acid chain: MASHKELVKNGLWDNNPALVQLLGLCPLLAVSATVTNALGLGIATILVLVGSNLIVSLVRQWIPQEVRIPVFVMIIASLVTCVQLLMNAYAYGLYLSLGIFIPLIVTNCIIIGRAESFASKNDPLPAVLDGLWMGMGMTAVLVLLGAMREILGNGTLFDGADLLLGDWATMLRIELFHVDSHFLLAMLPPGAFLGVGFLIALKNVIDKKMADRQPKEKAEIERARIS.

A run of 6 helical transmembrane segments spans residues 18–38 (ALVQLLGLCPLLAVSATVTNA), 39–59 (LGLGIATILVLVGSNLIVSLV), 69–89 (IPVFVMIIASLVTCVQLLMNA), 93–113 (GLYLSLGIFIPLIVTNCIIIG), 125–145 (LPAVLDGLWMGMGMTAVLVLL), and 182–202 (HFLLAMLPPGAFLGVGFLIAL).

This sequence belongs to the NqrDE/RnfAE family. The complex is composed of six subunits: RnfA, RnfB, RnfC, RnfD, RnfE and RnfG.

It is found in the cell inner membrane. In terms of biological role, part of a membrane-bound complex that couples electron transfer with translocation of ions across the membrane. The chain is Ion-translocating oxidoreductase complex subunit E from Aliivibrio fischeri (strain ATCC 700601 / ES114) (Vibrio fischeri).